A 116-amino-acid polypeptide reads, in one-letter code: Large ribosomal subunit protein bL17 (116 aa).

The protein belongs to the bacterial ribosomal protein bL17 family. Part of the 50S ribosomal subunit. Contacts protein L32.

This is Large ribosomal subunit protein bL17 from Prochlorococcus marinus (strain MIT 9515).